The primary structure comprises 749 residues: Long tail fiber protein Gp37 (749 aa).

An interaction with the receptor-recognizing protein gp38 region spans residues Asp-633 to Val-636. The region spanning Ser-638–Leu-737 is the Peptidase S74 domain. The stretch at Thr-720–Lys-749 forms a coiled coil.

Belongs to the S16-like long tail fiber protein Gp37 family. Homotrimer. Interacts with the receptor-recognizing protein Gp38. Post-translationally, proteolytic cleavage and release of the chaperone in the host cytosol stabilizes the folded protein.

It localises to the virion. In terms of biological role, constitues the trimeric tip of the long tail fiber that mediates the attachment to the host OmpC receptor and lipopolysaccharides, together with the receptor-recognizing protein Gp38. Functionally, the C-terminal chaperone protein mediates homotrimerization and proper folding of the catalytic trimer. The chain is Long tail fiber protein Gp37 from Salmonella phage S16 (Salmonella phage vB_SenM-S16).